The chain runs to 356 residues: Tyrosine recombinase XerS (356 aa).

Residues 16 to 121 form the Core-binding (CB) domain; the sequence is IMPWYVLDYY…ALSSLYKYLT (106 aa). The Tyr recombinase domain maps to 169 to 354; sequence AFLDYVDKEY…VNDEQKNALD (186 aa). Active-site residues include Arg-210, Lys-234, His-306, Arg-309, and His-332. Tyr-341 acts as the O-(3'-phospho-DNA)-tyrosine intermediate in catalysis.

It belongs to the 'phage' integrase family. XerS subfamily.

The protein resides in the cytoplasm. FtsK is required for recombination. Site-specific tyrosine recombinase, which acts by catalyzing the cutting and rejoining of the recombining DNA molecules. Essential to convert dimers of the bacterial chromosome into monomers to permit their segregation at cell division. The chain is Tyrosine recombinase XerS from Streptococcus equi subsp. zooepidemicus (strain MGCS10565).